The sequence spans 147 residues: UPF0178 protein IL2341 (147 aa).

The protein belongs to the UPF0178 family.

The protein is UPF0178 protein IL2341 of Idiomarina loihiensis (strain ATCC BAA-735 / DSM 15497 / L2-TR).